Consider the following 396-residue polypeptide: Cyclic GMP-AMP synthase-like receptor (396 aa).

ATP-binding positions include Ser-63 and 75–77 (EFD). Mg(2+)-binding residues include Glu-75, Asp-77, and Asp-194. Asp-194 is a GTP binding site. Residues 241–244 (QEQE), Lys-262, and 275–279 (SYYLK) each bind ATP. Residues Val-286, Glu-287, and Asp-292 each contribute to the Mn(2+) site. Residues 376 to 396 (IMNGGNPQQSANAENGSCLSM) are disordered. Polar residues predominate over residues 380–396 (GNPQQSANAENGSCLSM).

Belongs to the mab-21 family. The cofactor is Mg(2+). It depends on Mn(2+) as a cofactor.

It carries out the reaction GTP + ATP = 2',3'-cGAMP + 2 diphosphate. The enzyme catalyses GTP + ATP = pppGp(2'-5')A + diphosphate. It catalyses the reaction pppGp(2'-5')A = 2',3'-cGAMP + diphosphate. In terms of biological role, nucleotidyltransferase that catalyzes the formation of cyclic GMP-AMP (2',3'-cGAMP) from ATP and GTP and plays a key role in innate immunity. Acts as a key sensor of double-stranded RNA (dsRNA), the presence of dsRNA in the cytoplasm being a danger signal that triggers the immune responses. Directly binds dsRNA, activating the nucleotidyltransferase activity, leading to synthesis of 2',3'-cGAMP, a second messenger that binds to and activates Sting, thereby triggering the immune response via activation of the NF-kappa-B transcription factor. The sequence is that of Cyclic GMP-AMP synthase-like receptor from Aethina tumida (Small hive beetle).